The primary structure comprises 197 residues: Superoxide dismutase [Fe] (197 aa).

The Fe cation site is built by H26, H75, D157, and H161.

Belongs to the iron/manganese superoxide dismutase family. In terms of assembly, homotetramer. Fe cation is required as a cofactor.

The catalysed reaction is 2 superoxide + 2 H(+) = H2O2 + O2. Its function is as follows. Destroys superoxide anion radicals which are normally produced within the cells and which are toxic to biological systems. The sequence is that of Superoxide dismutase [Fe] from Cupriavidus metallidurans (strain ATCC 43123 / DSM 2839 / NBRC 102507 / CH34) (Ralstonia metallidurans).